The following is a 252-amino-acid chain: TLC domain-containing protein 1 (252 aa).

The signal sequence occupies residues 1 to 29 (MGPGWRAPSAALVGGSVALFGALRRAALA). The Extracellular portion of the chain corresponds to 30–47 (LPRPAAVRSRPGRVWRWR). Residues 41-235 (GRVWRWRNLL…LLRSDFFPSL (195 aa)) form the TLC domain. The helical transmembrane segment at 48–68 (NLLVSFAHSVLAGLWALFSLW) threads the bilayer. Topologically, residues 69 to 84 (QSPELLSDIQDGYSVS) are cytoplasmic. The helical transmembrane segment at 85-105 (GHLLVCFSSGYFIHDSLDIIF) threads the bilayer. Topologically, residues 106–124 (NQQSRSSWEYLVHHAMAIS) are extracellular. The helical intramembrane region spans 125–145 (AFVSLIITGRFLVAAMLLLLV). Residues 146–174 (EVSNIFLTIRMLLKMSNVPSPALYEANKY) are Extracellular-facing. The helical transmembrane segment at 175-195 (VNLVMYFAFRLAPQVYLTWYF) threads the bilayer. Over 196 to 202 (VRYVEVQ) the chain is Cytoplasmic. Residues 203–223 (GQGAFLMANLLLLDAMILMYF) traverse the membrane as a helical segment. The Extracellular portion of the chain corresponds to 224-252 (SRLLRSDFFPSLRKGSVGRDVDGEKFLID).

Interacts with CACNA1C in vitro; however the relevance of the interaction in vivo is unclear.

The protein localises to the cell membrane. Functionally, regulates the composition and fluidity of the plasma membrane. Inhibits the incorporation of membrane-fluidizing phospholipids containing omega-3 long-chain polyunsaturated fatty acids (LCPUFA) and thereby promotes membrane rigidity. Does not appear to have any effect on LCPUFA synthesis. This is TLC domain-containing protein 1 (TLCD1) from Gallus gallus (Chicken).